The chain runs to 318 residues: Isoaspartyl peptidase/L-asparaginase (318 aa).

The Nucleophile role is filled by Thr-180. Residues Arg-208–Asp-211 and Thr-229–Gly-232 contribute to the substrate site.

The protein belongs to the Ntn-hydrolase family. In terms of assembly, heterotetramer of two alpha and two beta chains arranged as a dimer of alpha/beta heterodimers. Post-translationally, cleaved into an alpha and beta chain by autocatalysis; this activates the enzyme. The N-terminal residue of the beta subunit is responsible for the nucleophile hydrolase activity.

It catalyses the reaction Cleavage of a beta-linked Asp residue from the N-terminus of a polypeptide.. In terms of biological role, degrades proteins damaged by L-isoaspartyl residue formation (also known as beta-Asp residues). Probably performs the final step in the degradation of the reserve polymer cyanophycin (depolymerizes the building block L-beta-Asp-Arg). Also has L-asparaginase activity. The polypeptide is Isoaspartyl peptidase/L-asparaginase (Nostoc sp. (strain PCC 7120 / SAG 25.82 / UTEX 2576)).